Consider the following 938-residue polypeptide: Isoleucine--tRNA ligase (938 aa).

Positions 58–68 (PYANGNIHIGH) match the 'HIGH' region motif. Residue Glu561 coordinates L-isoleucyl-5'-AMP. Residues 602–606 (KMSKS) carry the 'KMSKS' region motif. Residue Lys605 participates in ATP binding. 4 residues coordinate Zn(2+): Cys901, Cys904, Cys921, and Cys924.

Belongs to the class-I aminoacyl-tRNA synthetase family. IleS type 1 subfamily. Monomer. Zn(2+) is required as a cofactor.

The protein resides in the cytoplasm. The catalysed reaction is tRNA(Ile) + L-isoleucine + ATP = L-isoleucyl-tRNA(Ile) + AMP + diphosphate. In terms of biological role, catalyzes the attachment of isoleucine to tRNA(Ile). As IleRS can inadvertently accommodate and process structurally similar amino acids such as valine, to avoid such errors it has two additional distinct tRNA(Ile)-dependent editing activities. One activity is designated as 'pretransfer' editing and involves the hydrolysis of activated Val-AMP. The other activity is designated 'posttransfer' editing and involves deacylation of mischarged Val-tRNA(Ile). The polypeptide is Isoleucine--tRNA ligase (Yersinia pseudotuberculosis serotype O:1b (strain IP 31758)).